We begin with the raw amino-acid sequence, 253 residues long: Sulfoacetaldehyde reductase (253 aa).

6 to 30 (FITGATSGFGRAAAHRFAAAGWSLV) contributes to the NADP(+) binding site. Substrate is bound at residue Ser139. The active-site Proton acceptor is Tyr152.

It belongs to the short-chain dehydrogenases/reductases (SDR) family. Homodimer and heterotetramer.

The enzyme catalyses 2-hydroxyethane-1-sulfonate + NADP(+) = sulfoacetaldehyde + NADPH + H(+). It participates in organosulfur degradation. In terms of biological role, catalyzes the formation of isethionate from 2-sulfoacetaldehyde in the deaminative pathway of taurine. The enzyme is specific for NADPH; NADH is not a substrate. Responsible for most of the activity observed in taurine-grown cells. In Chromohalobacter salexigens (strain ATCC BAA-138 / DSM 3043 / CIP 106854 / NCIMB 13768 / 1H11), this protein is Sulfoacetaldehyde reductase (isfD).